The sequence spans 481 residues: Velvet complex subunit B (481 aa).

Disordered regions lie at residues 1–157 (MNSA…YSKI) and 241–339 (GTGA…NGYG). Composition is skewed to pro residues over residues 36–45 (HPPPPLPPPS), 53–62 (PPLPPPPSAP), and 96–112 (PYAP…QYPR). A Velvet domain is found at 160-464 (GSGWKYSLDV…ANQGIKIPIR (305 aa)). 2 stretches are compositionally biased toward low complexity: residues 241–255 (GTGA…TYSS) and 293–325 (QQSY…SAEP).

Belongs to the velvet family. VelB subfamily. In terms of assembly, component of the heterotrimeric velvet complex composed of laeA, veA and velB; VeA acting as a bridging protein between laeA and velB. Forms a heterodimeric complex with vosA; the formation of the velB-vosA complex is light-dependent.

Its subcellular location is the nucleus. The protein resides in the cytoplasm. Component of the velvet transcription factor complex that controls sexual/asexual developmental ratio in response to light, promoting sexual development in the darkness while stimulating asexual sporulation under illumination. The velvet complex acts as a global regulator for secondary metabolite gene expression. Component of the velB-VosA heterodimeric complex that plays a dual role in activating genes associated with spore maturation and repressing certain development-associated genes. The velB-VosA complex binds DNA through the DNA-binding domain of vosA that recognizes an 11-nucleotide consensus sequence 5'-CTGGCCGCGGC-3' consisting of two motifs in the promoters of key developmental regulatory genes. Controls the biosynthetic gene cluster for beauvericin, a depsipeptide mycotoxin that functions as a virulence determinant. Also regulates chromatin structure and transcription of siderophore biosynthetic genes and is required for infection of tomato plants. This Fusarium oxysporum f. sp. lycopersici (strain 4287 / CBS 123668 / FGSC 9935 / NRRL 34936) (Fusarium vascular wilt of tomato) protein is Velvet complex subunit B.